The following is a 139-amino-acid chain: Sec-independent protein translocase protein TatB (139 aa).

The helical transmembrane segment at 1-21 (MFDIGFTELLLVGLVALMVLG) threads the bilayer. Residues 69 to 139 (LDLEREMKQS…PLRSDRPSEP (71 aa)) form a disordered region. Over residues 80 to 95 (MPPPASNPAATPPSPP) the composition is skewed to pro residues.

The protein belongs to the TatB family. The Tat system comprises two distinct complexes: a TatABC complex, containing multiple copies of TatA, TatB and TatC subunits, and a separate TatA complex, containing only TatA subunits. Substrates initially bind to the TatABC complex, which probably triggers association of the separate TatA complex to form the active translocon.

The protein resides in the cell inner membrane. In terms of biological role, part of the twin-arginine translocation (Tat) system that transports large folded proteins containing a characteristic twin-arginine motif in their signal peptide across membranes. Together with TatC, TatB is part of a receptor directly interacting with Tat signal peptides. TatB may form an oligomeric binding site that transiently accommodates folded Tat precursor proteins before their translocation. The chain is Sec-independent protein translocase protein TatB from Stutzerimonas stutzeri (strain A1501) (Pseudomonas stutzeri).